Reading from the N-terminus, the 366-residue chain is Phenylalanine--tRNA ligase alpha subunit (366 aa).

Position 264 (E264) interacts with Mg(2+).

Belongs to the class-II aminoacyl-tRNA synthetase family. Phe-tRNA synthetase alpha subunit type 1 subfamily. Tetramer of two alpha and two beta subunits. Requires Mg(2+) as cofactor.

The protein localises to the cytoplasm. The catalysed reaction is tRNA(Phe) + L-phenylalanine + ATP = L-phenylalanyl-tRNA(Phe) + AMP + diphosphate + H(+). The sequence is that of Phenylalanine--tRNA ligase alpha subunit from Zymomonas mobilis subsp. mobilis (strain ATCC 31821 / ZM4 / CP4).